The primary structure comprises 108 residues: UPF0060 membrane protein CC_1976 (108 aa).

4 consecutive transmembrane segments (helical) span residues 4 to 24 (FAIY…FWAW), 27 to 47 (LGKS…FALL), 59 to 79 (AFAA…QVVE), and 85 to 105 (RWDL…LFGP).

Belongs to the UPF0060 family.

It is found in the cell inner membrane. This chain is UPF0060 membrane protein CC_1976, found in Caulobacter vibrioides (strain ATCC 19089 / CIP 103742 / CB 15) (Caulobacter crescentus).